A 901-amino-acid polypeptide reads, in one-letter code: Glutamate receptor 2.1 (901 aa).

The first 25 residues, methionine 1–alanine 25, serve as a signal peptide directing secretion. The Extracellular segment spans residues glutamine 26–threonine 574. Residues asparagine 46, asparagine 53, asparagine 204, asparagine 267, asparagine 331, asparagine 342, asparagine 461, asparagine 477, and asparagine 536 are each glycosylated (N-linked (GlcNAc...) asparagine). A helical membrane pass occupies residues leucine 575–leucine 595. The Cytoplasmic portion of the chain corresponds to glutamate 596–aspartate 604. Residues glycine 605 to alanine 625 form a helical membrane-spanning segment. Residues proline 626–arginine 629 lie on the Cytoplasmic side of the membrane. Residues valine 630–threonine 650 traverse the membrane as a helical segment. Topologically, residues glutamine 651–serine 823 are extracellular. The helical transmembrane segment at phenylalanine 824–tyrosine 844 threads the bilayer. Residues glutamine 845 to asparagine 901 lie on the Cytoplasmic side of the membrane.

This sequence belongs to the glutamate-gated ion channel (TC 1.A.10.1) family. As to quaternary structure, may form heteromers. Expressed predominantly in roots. First strongly detected in all cell types of the root except at the apex. Later expressed at the root-shoot junction.

Its subcellular location is the membrane. Glutamate-gated receptor that probably acts as a non-selective cation channel. May be involved in light-signal transduction and calcium homeostasis via the regulation of calcium influx into cells. This Arabidopsis thaliana (Mouse-ear cress) protein is Glutamate receptor 2.1 (GLR2.1).